Here is a 492-residue protein sequence, read N- to C-terminus: uncharacterized protein (492 aa).

An N-terminal signal peptide occupies residues 1–22 (MIRPNMFALLMLVVLAITSVNA). 7 N-linked (GlcNAc...) asparagine; by host glycosylation sites follow: Asn92, Asn97, Asn119, Asn146, Asn213, Asn267, and Asn458.

It localises to the secreted. This is an uncharacterized protein from Acanthamoeba polyphaga (Amoeba).